Reading from the N-terminus, the 100-residue chain is Cysteine-rich venom protein VAR1 (100 aa).

The first 22 residues, 1–22 (MILLKLYLTLAAILCQSRGTTS), serve as a signal peptide directing secretion. Residues 41–81 (NKHNDLRRTVDPPAKNMLKMSWDNIIAESAKRAALRCNQNE) form the SCP domain.

It belongs to the CRISP family. Contains 8 disulfide bonds. In terms of tissue distribution, expressed by the venom gland.

Its subcellular location is the secreted. Functionally, blocks ryanodine receptors, and potassium channels. This Varanus acanthurus (Ridge-tailed monitor) protein is Cysteine-rich venom protein VAR1.